Reading from the N-terminus, the 386-residue chain is Methionine aminopeptidase 1 (386 aa).

The C6H2-type zinc finger occupies 6 to 59 (TRECETEGCHSEAKLQCPTCIKLGIQGSYFCSQECFKGSWATHKLLHKKAKEDK). Zn(2+) is bound by residues cysteine 9, cysteine 14, cysteine 22, cysteine 25, cysteine 36, cysteine 40, histidine 48, and histidine 52. A protein is bound at residue histidine 202. Zn(2+) is bound by residues aspartate 219, aspartate 230, and histidine 293. A protein is bound at residue histidine 300. 2 residues coordinate Zn(2+): glutamate 326 and glutamate 357.

The protein belongs to the peptidase M24A family. Methionine aminopeptidase type 1 subfamily. As to quaternary structure, associates with the 60S ribosomal subunit of the 80S translational complex. Requires Zn(2+) as cofactor. The cofactor is Co(2+). It depends on Mn(2+) as a cofactor. Fe(2+) serves as cofactor.

It localises to the cytoplasm. It catalyses the reaction Release of N-terminal amino acids, preferentially methionine, from peptides and arylamides.. Cotranslationally removes the N-terminal methionine from nascent proteins. The N-terminal methionine is often cleaved when the second residue in the primary sequence is small and uncharged (Met-Ala-, Cys, Gly, Pro, Ser, Thr, or Val). This Danio rerio (Zebrafish) protein is Methionine aminopeptidase 1 (metap1).